Consider the following 128-residue polypeptide: NADH-ubiquinone oxidoreductase chain 3 (128 aa).

The next 3 membrane-spanning stretches (helical) occupy residues 4–24, 50–70, and 86–106; these read FIIF…VNIL, LAFN…DLEI, and YGFT…VYEI.

This sequence belongs to the complex I subunit 3 family. Complex I is composed of 37 different subunits.

It is found in the mitochondrion membrane. It carries out the reaction a ubiquinone + NADH + 5 H(+)(in) = a ubiquinol + NAD(+) + 4 H(+)(out). Core subunit of the mitochondrial membrane respiratory chain NADH dehydrogenase (Complex I) that is believed to belong to the minimal assembly required for catalysis. Complex I functions in the transfer of electrons from NADH to the respiratory chain. The immediate electron acceptor for the enzyme is believed to be ubiquinone. The polypeptide is NADH-ubiquinone oxidoreductase chain 3 (ND3) (Yarrowia lipolytica (strain CLIB 122 / E 150) (Yeast)).